The chain runs to 185 residues: Prenylated Rab acceptor protein 1 (185 aa).

The Cytoplasmic portion of the chain corresponds to 1–78 (MAAQKDQQKD…RNVEYYQSNY (78 aa)). Residues 30–54 (AGREWLERRRATIRPWGTFVDQQRF) are required for interaction with prenylated RAB3A and VAMP2. Helical transmembrane passes span 79–94 (VFVF…VTSP) and 95–112 (MLLV…ILYL). At 113-131 (RTLQSKLVLFGREVSPAHQ) the chain is on the cytoplasmic side. The next 2 helical transmembrane spans lie at 132 to 148 (YALA…LAGA) and 149 to 165 (GSAV…LIGS). The segment at 165-185 (SHAAFHQMEPADGEELQMEPV) is required for interaction with GDI1. Residues 166-185 (HAAFHQMEPADGEELQMEPV) lie on the Cytoplasmic side of the membrane. A required for interaction with prenylated RAB3A and VAMP2 region spans residues 175-185 (ADGEELQMEPV). Positions 175 to 185 (ADGEELQMEPV) are homodimerization.

The protein belongs to the PRA1 family. Homodimer. Interacts with VAMP2 (synaptobrevin-2), GDI1, NRDG1 and PCLO. Interacts with prenylated Rab proteins (including RAB5 and RAB6), and with the members of the Ras superfamily HRAS, RHOA, TC21, and RAP1A.

It localises to the cell membrane. It is found in the cytoplasm. Its subcellular location is the golgi apparatus. The protein resides in the cytoplasmic vesicle. The protein localises to the secretory vesicle. It localises to the synaptic vesicle. Functionally, general Rab protein regulator required for vesicle formation from the Golgi complex. May control vesicle docking and fusion by mediating the action of Rab GTPases to the SNARE complexes. In addition it inhibits the removal of Rab GTPases from the membrane by GDI1. The sequence is that of Prenylated Rab acceptor protein 1 (Rabac1) from Mus musculus (Mouse).